Reading from the N-terminus, the 203-residue chain is GTP-binding protein YPTM2 (203 aa).

Residues 15–23 (GDSGVGKSC), 33–40 (YLDSYIST), 63–67 (DTAGQ), 121–124 (NKSD), and 151–153 (SAK) contribute to the GTP site. The Effector region signature appears at 37-45 (YISTIGVDF). S-geranylgeranyl cysteine attachment occurs at residues C200 and C201.

The protein belongs to the small GTPase superfamily. Rab family. Its expression is weak in stems, higher in roots, leaves and coleoptiles, but highest in flowers.

It localises to the cell membrane. Protein transport. Probably involved in vesicular traffic. This is GTP-binding protein YPTM2 (YPTM2) from Zea mays (Maize).